An 86-amino-acid polypeptide reads, in one-letter code: MRLFLSLPVLVVALLTILEGPGPAQGAPEAVDTSTGLDKLKEFGNTLEDKVREFFNRVKESDIPAKTRNWFSETLQKVKEKLRIES.

The first 26 residues, 1–26, serve as a signal peptide directing secretion; that stretch reads MRLFLSLPVLVVALLTILEGPGPAQG.

It belongs to the apolipoprotein C1 family.

The protein resides in the secreted. Inhibitor of lipoprotein binding to the low density lipoprotein (LDL) receptor, LDL receptor-related protein, and very low density lipoprotein (VLDL) receptor. Associates with high density lipoproteins (HDL) and the triacylglycerol-rich lipoproteins in the plasma and makes up about 10% of the protein of the VLDL and 2% of that of HDL. Appears to interfere directly with fatty acid uptake and is also the major plasma inhibitor of cholesteryl ester transfer protein (CETP). Binds free fatty acids and reduces their intracellular esterification. Modulates the interaction of APOE with beta-migrating VLDL and inhibits binding of beta-VLDL to the LDL receptor-related protein. This chain is Apolipoprotein C-I (APOC1), found in Plecturocebus moloch (Dusky titi monkey).